We begin with the raw amino-acid sequence, 211 residues long: Thiamine-phosphate synthase (211 aa).

4-amino-2-methyl-5-(diphosphooxymethyl)pyrimidine-binding positions include 40–42 (QLR) and Asn-72. Asp-73 and Asp-92 together coordinate Mg(2+). Ser-111 lines the 4-amino-2-methyl-5-(diphosphooxymethyl)pyrimidine pocket. 136–138 (TST) lines the 2-[(2R,5Z)-2-carboxy-4-methylthiazol-5(2H)-ylidene]ethyl phosphate pocket. Residue Lys-139 coordinates 4-amino-2-methyl-5-(diphosphooxymethyl)pyrimidine. Residues Gly-167 and 187–188 (VS) contribute to the 2-[(2R,5Z)-2-carboxy-4-methylthiazol-5(2H)-ylidene]ethyl phosphate site.

The protein belongs to the thiamine-phosphate synthase family. The cofactor is Mg(2+).

The enzyme catalyses 2-[(2R,5Z)-2-carboxy-4-methylthiazol-5(2H)-ylidene]ethyl phosphate + 4-amino-2-methyl-5-(diphosphooxymethyl)pyrimidine + 2 H(+) = thiamine phosphate + CO2 + diphosphate. It carries out the reaction 2-(2-carboxy-4-methylthiazol-5-yl)ethyl phosphate + 4-amino-2-methyl-5-(diphosphooxymethyl)pyrimidine + 2 H(+) = thiamine phosphate + CO2 + diphosphate. It catalyses the reaction 4-methyl-5-(2-phosphooxyethyl)-thiazole + 4-amino-2-methyl-5-(diphosphooxymethyl)pyrimidine + H(+) = thiamine phosphate + diphosphate. It functions in the pathway cofactor biosynthesis; thiamine diphosphate biosynthesis; thiamine phosphate from 4-amino-2-methyl-5-diphosphomethylpyrimidine and 4-methyl-5-(2-phosphoethyl)-thiazole: step 1/1. Its function is as follows. Condenses 4-methyl-5-(beta-hydroxyethyl)thiazole monophosphate (THZ-P) and 2-methyl-4-amino-5-hydroxymethyl pyrimidine pyrophosphate (HMP-PP) to form thiamine monophosphate (TMP). This chain is Thiamine-phosphate synthase, found in Laribacter hongkongensis (strain HLHK9).